A 245-amino-acid chain; its full sequence is Leucyl/phenylalanyl-tRNA--protein transferase (245 aa).

Belongs to the L/F-transferase family.

The protein resides in the cytoplasm. The enzyme catalyses N-terminal L-lysyl-[protein] + L-leucyl-tRNA(Leu) = N-terminal L-leucyl-L-lysyl-[protein] + tRNA(Leu) + H(+). It catalyses the reaction N-terminal L-arginyl-[protein] + L-leucyl-tRNA(Leu) = N-terminal L-leucyl-L-arginyl-[protein] + tRNA(Leu) + H(+). It carries out the reaction L-phenylalanyl-tRNA(Phe) + an N-terminal L-alpha-aminoacyl-[protein] = an N-terminal L-phenylalanyl-L-alpha-aminoacyl-[protein] + tRNA(Phe). Its function is as follows. Functions in the N-end rule pathway of protein degradation where it conjugates Leu, Phe and, less efficiently, Met from aminoacyl-tRNAs to the N-termini of proteins containing an N-terminal arginine or lysine. The sequence is that of Leucyl/phenylalanyl-tRNA--protein transferase from Paraburkholderia phytofirmans (strain DSM 17436 / LMG 22146 / PsJN) (Burkholderia phytofirmans).